Consider the following 800-residue polypeptide: Phenylalanine--tRNA ligase beta subunit (800 aa).

Residues 39-154 (TKEIKNLVVG…TEVKPGTDAL (116 aa)) enclose the tRNA-binding domain. The region spanning 408–483 (CFVTPIDISV…RIYGYDKIPS (76 aa)) is the B5 domain. Mg(2+) contacts are provided by Asp461, Asp467, Glu470, and Glu471. The FDX-ACB domain maps to 708-800 (PRFPGVSRDI…ALKSEGATIR (93 aa)).

This sequence belongs to the phenylalanyl-tRNA synthetase beta subunit family. Type 1 subfamily. As to quaternary structure, tetramer of two alpha and two beta subunits. Requires Mg(2+) as cofactor.

The protein localises to the cytoplasm. It carries out the reaction tRNA(Phe) + L-phenylalanine + ATP = L-phenylalanyl-tRNA(Phe) + AMP + diphosphate + H(+). In Staphylococcus saprophyticus subsp. saprophyticus (strain ATCC 15305 / DSM 20229 / NCIMB 8711 / NCTC 7292 / S-41), this protein is Phenylalanine--tRNA ligase beta subunit.